The sequence spans 358 residues: Homoserine O-acetyltransferase (358 aa).

The AB hydrolase-1 domain maps to 41-343 (NAVLICHALT…DYGHDAFLVD (303 aa)). The active-site Nucleophile is Ser143. Arg212 serves as a coordination point for substrate. Active-site residues include Asp304 and His337. Residue Asp338 participates in substrate binding.

It belongs to the AB hydrolase superfamily. MetX family. As to quaternary structure, homodimer.

It localises to the cytoplasm. The catalysed reaction is L-homoserine + acetyl-CoA = O-acetyl-L-homoserine + CoA. It participates in amino-acid biosynthesis; L-methionine biosynthesis via de novo pathway; O-acetyl-L-homoserine from L-homoserine: step 1/1. In terms of biological role, transfers an acetyl group from acetyl-CoA to L-homoserine, forming acetyl-L-homoserine. This chain is Homoserine O-acetyltransferase, found in Haemophilus influenzae (strain 86-028NP).